The following is a 69-amino-acid chain: DNA-directed RNA polymerase subunit epsilon (69 aa).

This sequence belongs to the RNA polymerase subunit epsilon family. As to quaternary structure, RNAP is composed of a core of 2 alpha, a beta and a beta' subunit. The core is associated with a delta subunit, and at least one of epsilon or omega. When a sigma factor is associated with the core the holoenzyme is formed, which can initiate transcription.

The enzyme catalyses RNA(n) + a ribonucleoside 5'-triphosphate = RNA(n+1) + diphosphate. In terms of biological role, a non-essential component of RNA polymerase (RNAP). The polypeptide is DNA-directed RNA polymerase subunit epsilon (Halalkalibacterium halodurans (strain ATCC BAA-125 / DSM 18197 / FERM 7344 / JCM 9153 / C-125) (Bacillus halodurans)).